Here is a 347-residue protein sequence, read N- to C-terminus: GMP reductase (347 aa).

NADP(+) is bound at residue 108–131 (DDFTKTRQILAMSTALRFICVDVA). K(+) contacts are provided by Gly181 and Gly183. Cys186 acts as the Thioimidate intermediate in catalysis. 216 to 239 (IVGDGGCTCPGDVAKAFGGGADFV) is an NADP(+) binding site.

The protein belongs to the IMPDH/GMPR family. GuaC type 1 subfamily. Homotetramer.

The catalysed reaction is IMP + NH4(+) + NADP(+) = GMP + NADPH + 2 H(+). In terms of biological role, catalyzes the irreversible NADPH-dependent deamination of GMP to IMP. It functions in the conversion of nucleobase, nucleoside and nucleotide derivatives of G to A nucleotides, and in maintaining the intracellular balance of A and G nucleotides. The polypeptide is GMP reductase (Aeromonas salmonicida (strain A449)).